A 62-amino-acid chain; its full sequence is Chromatin protein Cren7 1 (62 aa).

It belongs to the Cren7 family. As to quaternary structure, monomer. Methylated at multiple sites, to varying extents.

The protein resides in the chromosome. The protein localises to the cytoplasm. Functionally, a chromatin protein, binds double-stranded DNA without sequence specificity. Constrains negative DNA supercoils. This is Chromatin protein Cren7 1 (cren7-1) from Hyperthermus butylicus (strain DSM 5456 / JCM 9403 / PLM1-5).